The chain runs to 233 residues: Small ribosomal subunit protein uS3 (233 aa).

In terms of domain architecture, KH type-2 spans 28–96; it reads EFADNLDSDF…LRKVVADIAG (69 aa).

It belongs to the universal ribosomal protein uS3 family. Part of the 30S ribosomal subunit. Forms a tight complex with proteins S10 and S14.

Binds the lower part of the 30S subunit head. Binds mRNA in the 70S ribosome, positioning it for translation. This chain is Small ribosomal subunit protein uS3, found in Shigella flexneri.